A 197-amino-acid polypeptide reads, in one-letter code: ATP-dependent Clp protease proteolytic subunit (197 aa).

The active-site Nucleophile is the Ser-102. The active site involves His-127.

Belongs to the peptidase S14 family. In terms of assembly, fourteen ClpP subunits assemble into 2 heptameric rings which stack back to back to give a disk-like structure with a central cavity, resembling the structure of eukaryotic proteasomes.

Its subcellular location is the cytoplasm. The catalysed reaction is Hydrolysis of proteins to small peptides in the presence of ATP and magnesium. alpha-casein is the usual test substrate. In the absence of ATP, only oligopeptides shorter than five residues are hydrolyzed (such as succinyl-Leu-Tyr-|-NHMec, and Leu-Tyr-Leu-|-Tyr-Trp, in which cleavage of the -Tyr-|-Leu- and -Tyr-|-Trp bonds also occurs).. Functionally, cleaves peptides in various proteins in a process that requires ATP hydrolysis. Has a chymotrypsin-like activity. Plays a major role in the degradation of misfolded proteins. This is ATP-dependent Clp protease proteolytic subunit from Buchnera aphidicola subsp. Schizaphis graminum (strain Sg).